The primary structure comprises 211 residues: ATP phosphoribosyltransferase (211 aa).

This sequence belongs to the ATP phosphoribosyltransferase family. Short subfamily. Heteromultimer composed of HisG and HisZ subunits.

It is found in the cytoplasm. The catalysed reaction is 1-(5-phospho-beta-D-ribosyl)-ATP + diphosphate = 5-phospho-alpha-D-ribose 1-diphosphate + ATP. It functions in the pathway amino-acid biosynthesis; L-histidine biosynthesis; L-histidine from 5-phospho-alpha-D-ribose 1-diphosphate: step 1/9. In terms of biological role, catalyzes the condensation of ATP and 5-phosphoribose 1-diphosphate to form N'-(5'-phosphoribosyl)-ATP (PR-ATP). Has a crucial role in the pathway because the rate of histidine biosynthesis seems to be controlled primarily by regulation of HisG enzymatic activity. This Ectopseudomonas mendocina (strain ymp) (Pseudomonas mendocina) protein is ATP phosphoribosyltransferase.